Here is a 354-residue protein sequence, read N- to C-terminus: Guanine nucleotide-binding protein G(o) subunit alpha (354 aa).

G2 is lipidated: N-myristoyl glycine. The S-palmitoyl cysteine moiety is linked to residue C3. In terms of domain architecture, G-alpha spans 32-354; that stretch reads KDIKLLLLGA…ANNLRGCGLY (323 aa). Residues 35 to 48 are G1 motif; that stretch reads KLLLLGAGESGKST. GTP-binding positions include 40-47, 176-182, 201-205, 270-273, and A326; these read GAGESGKS, LRTRVKT, DVGGQ, and NKKD. Residues S47 and T182 each coordinate Mg(2+). The segment at 174-182 is G2 motif; that stretch reads DILRTRVKT. The segment at 197-206 is G3 motif; that stretch reads FKLFDVGGQR. Residues 266–273 form a G4 motif region; the sequence is ILFLNKKD. A G5 motif region spans residues 324 to 329; the sequence is TCATDT.

This sequence belongs to the G-alpha family. G(i/o/t/z) subfamily. In terms of assembly, g proteins are composed of 3 units; alpha, beta and gamma. The alpha chain contains the guanine nucleotide binding site.

Functionally, guanine nucleotide-binding proteins (G proteins) are involved as modulators or transducers in various transmembrane signaling systems. The G(o) protein function is not clear. The protein is Guanine nucleotide-binding protein G(o) subunit alpha of Lymnaea stagnalis (Great pond snail).